Here is a 156-residue protein sequence, read N- to C-terminus: Cyanate hydratase (156 aa).

Catalysis depends on residues R96, E99, and S122.

It belongs to the cyanase family.

It carries out the reaction cyanate + hydrogencarbonate + 3 H(+) = NH4(+) + 2 CO2. Catalyzes the reaction of cyanate with bicarbonate to produce ammonia and carbon dioxide. In Escherichia coli O7:K1 (strain IAI39 / ExPEC), this protein is Cyanate hydratase.